Here is a 223-residue protein sequence, read N- to C-terminus: Ribonuclease 3 (223 aa).

In terms of domain architecture, RNase III spans 3-125 (LERLQKKLSY…IIAAIYLDAG (123 aa)). A Mg(2+)-binding site is contributed by Glu-38. Residue Asp-42 is part of the active site. Mg(2+)-binding residues include Asp-111 and Glu-114. Residue Glu-114 is part of the active site. In terms of domain architecture, DRBM spans 152 to 222 (DPKTRLQEFL…AEQVLAKLTT (71 aa)).

Belongs to the ribonuclease III family. In terms of assembly, homodimer. The cofactor is Mg(2+).

The protein resides in the cytoplasm. It carries out the reaction Endonucleolytic cleavage to 5'-phosphomonoester.. In terms of biological role, digests double-stranded RNA. Involved in the processing of primary rRNA transcript to yield the immediate precursors to the large and small rRNAs (23S and 16S). Processes some mRNAs, and tRNAs when they are encoded in the rRNA operon. Processes pre-crRNA and tracrRNA of type II CRISPR loci if present in the organism. The polypeptide is Ribonuclease 3 (Actinobacillus pleuropneumoniae serotype 5b (strain L20)).